The following is a 491-amino-acid chain: (S)-canadine synthase (491 aa).

Residues 6-26 (LLVCATVAIVFATTTIIRILF) traverse the membrane as a helical segment. Cysteine 434 is a binding site for heme.

It belongs to the cytochrome P450 family. It depends on heme as a cofactor. As to expression, expressed at low levels in roots.

It localises to the endoplasmic reticulum membrane. Its subcellular location is the microsome membrane. The enzyme catalyses (S)-tetrahydrocolumbamine + reduced [NADPH--hemoprotein reductase] + O2 = (S)-canadine + oxidized [NADPH--hemoprotein reductase] + 2 H2O + H(+). Functionally, involved in the last but one step of the biosynthesis of berberine, an antimicrobial benzylisoquinoline alkaloid. Converts (S)-tetrahydrocolumbamine (THC) to (S)-tetrahydroberberine (THB) also called (S)-canadine. This is (S)-canadine synthase (CYP719A1) from Coptis japonica (Japanese goldthread).